The primary structure comprises 611 residues: Angiotensin-converting enzyme (611 aa).

The signal sequence occupies residues 1–17; it reads MKLLVVTILAGLAVCHG. The Peptidase M2 domain maps to 19-607; sequence TKEEIVATEY…VESLCHQRYK (589 aa). Asparagine 53 carries an N-linked (GlcNAc...) asparagine glycan. The cysteines at positions 133 and 141 are disulfide-linked. Asparagine 196 carries N-linked (GlcNAc...) asparagine glycosylation. A disulfide bridge links cysteine 336 with cysteine 354. Histidine 367 is a Zn(2+) binding site. Glutamate 368 functions as the Proton acceptor in the catalytic mechanism. Zn(2+) contacts are provided by histidine 371 and glutamate 395. Histidine 497 (proton donor) is an active-site residue. A disulfide bridge connects residues cysteine 522 and cysteine 540. The N-linked (GlcNAc...) asparagine glycan is linked to asparagine 531.

This sequence belongs to the peptidase M2 family. It depends on Zn(2+) as a cofactor. In terms of tissue distribution, expressed in the compound ganglion and in the posterior region of the midgut.

Its subcellular location is the secreted. The protein resides in the extracellular space. It carries out the reaction Release of a C-terminal dipeptide, oligopeptide-|-Xaa-Yaa, when Xaa is not Pro, and Yaa is neither Asp nor Glu. Thus, conversion of angiotensin I to angiotensin II, with increase in vasoconstrictor activity, but no action on angiotensin II.. Involved in the specific maturation or degradation of a number of bioactive peptides. This Haematobia irritans exigua (Buffalo fly) protein is Angiotensin-converting enzyme (ACE).